The sequence spans 539 residues: Protoporphyrinogen oxidase (539 aa).

Residues 18–23, 43–44, Trp51, 70–73, Val300, and 521–523 each bind FAD; these read GGGVSG, ES, GPRT, and PGV.

Belongs to the protoporphyrinogen/coproporphyrinogen oxidase family. Protoporphyrinogen oxidase subfamily. It depends on FAD as a cofactor.

It localises to the mitochondrion inner membrane. It catalyses the reaction protoporphyrinogen IX + 3 O2 = protoporphyrin IX + 3 H2O2. It participates in porphyrin-containing compound metabolism; protoporphyrin-IX biosynthesis; protoporphyrin-IX from protoporphyrinogen-IX: step 1/1. Its function is as follows. Catalyzes the 6-electron oxidation of protoporphyrinogen-IX to form protoporphyrin-IX. The polypeptide is Protoporphyrinogen oxidase (Saccharomyces cerevisiae (strain ATCC 204508 / S288c) (Baker's yeast)).